Reading from the N-terminus, the 282-residue chain is Transcription factor LBX1 (282 aa).

Residues 1-20 (MTSKEDGKAAPGEERRRSPL) show a composition bias toward basic and acidic residues. The disordered stretch occupies residues 1–36 (MTSKEDGKAAPGEERRRSPLDHLPPPANSNKPLTPF). Positions 125–184 (RRKSRTAFTNHQIYELEKRFLYQKYLSPADRDQIAQQLGLTNAQVITWFQNRRAKLKRDL) form a DNA-binding region, homeobox. The disordered stretch occupies residues 210-282 (ELEQNSEASG…EEDEEIDVDD (73 aa)). Positions 218-227 (SGGGGGGGCG) are enriched in gly residues. The span at 269-282 (CSEDEEDEEIDVDD) shows a compositional bias: acidic residues.

As to quaternary structure, interacts with SKOR1 which acts as a transcriptional corepressor. Expressed in the dorsal part of the spinal cord and hindbrain and in presumptive myogenic cells in lateral regions of differentiating somites.

The protein localises to the nucleus. In terms of biological role, transcription factor required for the development of GABAergic interneurons in the dorsal horn of the spinal cord and migration and further development of hypaxial muscle precursor cells for limb muscles, diaphragm and hypoglossal cord. The chain is Transcription factor LBX1 (Lbx1) from Mus musculus (Mouse).